Consider the following 325-residue polypeptide: Casein kinase I isoform alpha (325 aa).

N-acetylalanine is present on alanine 2. Serine 4 is modified (phosphoserine). An N6-acetyllysine modification is found at lysine 8. Residues 17-285 form the Protein kinase domain; sequence YKLVRKIGSG…YLRQLFRILF (269 aa). ATP contacts are provided by residues 23–31 and lysine 46; that span reads IGSGSFGDI. Residue aspartate 136 is the Proton acceptor of the active site. Isoleucine 156 is modified (phosphoserine).

This sequence belongs to the protein kinase superfamily. CK1 Ser/Thr protein kinase family. Casein kinase I subfamily. In terms of assembly, interacts with the Axin complex. Interacts with TUT1, leading to TUT1 phosphorylation. Interacts with FAM83A, FAM83B, FAM83C, FAM83D, FAM83E, FAM83F, FAM83G and FAM83H (via DUF1669). Interaction with FAM83H recruits CSNK1A1 to keratin filaments. Post-translationally, phosphorylated by MTOR in response to mitogenic stimulation, leading to its activation.

It localises to the cytoplasm. Its subcellular location is the cytoskeleton. The protein resides in the microtubule organizing center. It is found in the centrosome. The protein localises to the chromosome. It localises to the centromere. Its subcellular location is the kinetochore. The protein resides in the nucleus speckle. It is found in the cilium basal body. The protein localises to the spindle. The catalysed reaction is L-seryl-[protein] + ATP = O-phospho-L-seryl-[protein] + ADP + H(+). It catalyses the reaction L-threonyl-[protein] + ATP = O-phospho-L-threonyl-[protein] + ADP + H(+). Casein kinases are operationally defined by their preferential utilization of acidic proteins such as caseins as substrates. Can phosphorylate a large number of proteins. Participates in Wnt signaling. Phosphorylates CTNNB1 at 'Ser-45'. May phosphorylate PER1 and PER2. May play a role in segregating chromosomes during mitosis. May play a role in keratin cytoskeleton disassembly and thereby, it may regulate epithelial cell migration. Acts as a positive regulator of mTORC1 and mTORC2 signaling in response to nutrients by mediating phosphorylation of DEPTOR inhibitor. Acts as an inhibitor of NLRP3 inflammasome assembly by mediating phosphorylation of NLRP3. The polypeptide is Casein kinase I isoform alpha (Csnk1a1) (Rattus norvegicus (Rat)).